The following is a 429-amino-acid chain: UPF0761 membrane protein ABO_1543 (429 aa).

6 consecutive transmembrane segments (helical) span residues 45 to 65 (LFAI…VPAL), 102 to 122 (LTVL…STVE), 141 to 161 (LLMY…GLAI), 184 to 204 (WLAV…YTVV), 216 to 236 (LGAA…TFFI), and 256 to 278 (LLWI…ALVV).

It belongs to the UPF0761 family.

Its subcellular location is the cell inner membrane. The protein is UPF0761 membrane protein ABO_1543 of Alcanivorax borkumensis (strain ATCC 700651 / DSM 11573 / NCIMB 13689 / SK2).